We begin with the raw amino-acid sequence, 357 residues long: Set1 complex component swd2 (357 aa).

4 WD repeats span residues 24-65, 110-149, 199-241, and 247-289; these read NFVG…KSLA, GHKQ…CQGL, PPHV…RVPS, and TQDG…QTVN.

It belongs to the WD repeat SWD2 family. Component of the Set1 complex composed of ash2, sdc1, set1, shg1, spp1, swd1, swd2 and swd3.

It localises to the nucleus. Functionally, the Set1 complex specifically methylates 'Lys-4' of histone H3. This chain is Set1 complex component swd2, found in Schizosaccharomyces pombe (strain 972 / ATCC 24843) (Fission yeast).